The chain runs to 497 residues: mRNA cleavage and polyadenylation factor CLP1 (497 aa).

ATP-binding positions include E34, K73, and 157–162 (HSGKTS).

This sequence belongs to the Clp1 family. Clp1 subfamily. As to quaternary structure, component of a pre-mRNA cleavage factor complex. Interacts directly with PCF11.

The protein localises to the nucleus. Functionally, required for endonucleolytic cleavage during polyadenylation-dependent pre-mRNA 3'-end formation. The sequence is that of mRNA cleavage and polyadenylation factor CLP1 from Debaryomyces hansenii (strain ATCC 36239 / CBS 767 / BCRC 21394 / JCM 1990 / NBRC 0083 / IGC 2968) (Yeast).